Reading from the N-terminus, the 686-residue chain is MSDDQNKRVNEHSKDEQLEQYRTDNSGKKMTTNQGLRVSEDEHSLKAGVRGPTLMEDFHFREKMTHFDHERIPERVVHARGFGVHGFFQVYEPMTEYTRAKFLQDPSVKTPVFVRFSTVAGSKGSADTVRDARGFATKFYTEEGNYDLVGNNIPVFFIQDAIKFPDLVHAFKPEPHNEMPQAATAHDTFWDFVANNPESAHMVMWTMSDRGIPRSYRMMEGFGVHTFRFVNEQGKARFVKFHWKPVLGVHSLVWDEAQKIAGKDPDFHRRDLWETIENGGKVEYELGVQMIDEEDEFKFDFDILDPTKLWPEELVPVKIIGKMTLNRNQDNVFAETEQVAFHPGNVVPGIDFTNDPLLQGRLFSYTDTQLIRLGGPNFHEIPINRPVCPFHNNQYDGYHRMTINKGPVAYHKNSLQNNDPSPATAEEGGYVHYQEKVEGKKIRQRSDSFNDYYSQAKLFWNSMSPVEKQHIISAFCFEVGKVKSKDVQRQVVDVFSNVDADLAEEIAKGVGVAAPAKRKASKEILTSPALSQARTVKTASTRKVAVLAGNGFHEKELQTVLEALKQEGITVDIISQNLGYMTSGSGQQLEASGTFLTVDSVLYDAVYAAGGLELKDNKQAMAFIREAYNHYKAIGAANEGIDLLQSSVGTTEGLGIVTAKDEPDYTAFSKAFIDAVAAHRHWDRRI.

Over residues 1–27 (MSDDQNKRVNEHSKDEQLEQYRTDNSG) the composition is skewed to basic and acidic residues. A disordered region spans residues 1-43 (MSDDQNKRVNEHSKDEQLEQYRTDNSGKKMTTNQGLRVSEDEH). Residues H78 and N151 contribute to the active site. Heme is bound at residue Y365.

The protein belongs to the catalase family. HPII subfamily. It depends on heme as a cofactor.

It carries out the reaction 2 H2O2 = O2 + 2 H2O. Decomposes hydrogen peroxide into water and oxygen; serves to protect cells from the toxic effects of hydrogen peroxide. Involved in sporulation. The protein is Catalase-2 (katE) of Bacillus subtilis (strain 168).